The chain runs to 409 residues: Phenoxybenzoate dioxygenase subunit alpha (409 aa).

One can recognise a Rieske domain in the interval 45-149 (WQPVALSADV…VEERYGLVFA (105 aa)). Positions 85, 87, 104, and 107 each coordinate [2Fe-2S] cluster. Fe cation contacts are provided by H210 and H215.

This sequence belongs to the bacterial ring-hydroxylating dioxygenase alpha subunit family. This dioxygenase system consists of two proteins: the alpha subunit (PobA) and a subunit (PobB) that acts as a ferredoxin and a ferredoxin reductase. The cofactor is [2Fe-2S] cluster. It depends on Fe cation as a cofactor.

It functions in the pathway aromatic compound metabolism; carboxydiphenyl ether degradation. Degrades exclusively diarylether compounds having carboxyl groups in the 3- or 4-position. Yields a hemiacetal that spontaneously hydrolyzes to phenol and protocatechuate. The chain is Phenoxybenzoate dioxygenase subunit alpha (pobA) from Ectopseudomonas oleovorans (Pseudomonas oleovorans).